The primary structure comprises 510 residues: 2,3-bisphosphoglycerate-independent phosphoglycerate mutase (510 aa).

Residues Asp-12 and Ser-62 each contribute to the Mn(2+) site. Ser-62 acts as the Phosphoserine intermediate in catalysis. Substrate contacts are provided by residues His-123, 153–154 (RD), Arg-185, Arg-191, 260–263 (RPDR), and Lys-335. Mn(2+) contacts are provided by Asp-402, His-406, Asp-443, His-444, and His-461.

It belongs to the BPG-independent phosphoglycerate mutase family. In terms of assembly, monomer. It depends on Mn(2+) as a cofactor.

The catalysed reaction is (2R)-2-phosphoglycerate = (2R)-3-phosphoglycerate. The protein operates within carbohydrate degradation; glycolysis; pyruvate from D-glyceraldehyde 3-phosphate: step 3/5. Catalyzes the interconversion of 2-phosphoglycerate and 3-phosphoglycerate. The protein is 2,3-bisphosphoglycerate-independent phosphoglycerate mutase of Listeria monocytogenes serovar 1/2a (strain ATCC BAA-679 / EGD-e).